We begin with the raw amino-acid sequence, 550 residues long: Formate--tetrahydrofolate ligase (550 aa).

60–67 (TPFGEGKT) provides a ligand contact to ATP.

This sequence belongs to the formate--tetrahydrofolate ligase family.

The catalysed reaction is (6S)-5,6,7,8-tetrahydrofolate + formate + ATP = (6R)-10-formyltetrahydrofolate + ADP + phosphate. It participates in one-carbon metabolism; tetrahydrofolate interconversion. The sequence is that of Formate--tetrahydrofolate ligase from Campylobacter curvus (strain 525.92).